A 270-amino-acid polypeptide reads, in one-letter code: Tetraspanin-17 (270 aa).

The Cytoplasmic segment spans residues 1 to 19 (MPGKHQQFQDPEVGCCGKY). The chain crosses the membrane as a helical span at residues 20 to 40 (FLFGFNIVFWVLGALFLAIGL). Topologically, residues 41 to 63 (WAWGEKGVLSNISGLTDLGGLDP) are extracellular. N51 carries an N-linked (GlcNAc...) asparagine glycan. Residues 64–84 (VWLFVVIGGIMSVLGFAGCIG) traverse the membrane as a helical segment. Residues 85-94 (ALRENTFLLK) are Cytoplasmic-facing. The chain crosses the membrane as a helical span at residues 95–115 (FFSVFLGLIFFLELAAGILAF). Over 116 to 234 (VFKDWIRDQL…GQFEKWLQDN (119 aa)) the chain is Extracellular. 4 disulfides stabilise this stretch: C155/C223, C156/C188, C172/C182, and C189/C202. The N-linked (GlcNAc...) asparagine glycan is linked to N171. A helical membrane pass occupies residues 235-255 (LIVVAGVLVAIALLQICGICL). The Cytoplasmic segment spans residues 256–270 (AQNLVSDIEAVKANW).

Belongs to the tetraspanin (TM4SF) family. As to quaternary structure, interacts with ADAM10; the interaction influences ADAM10 substrate specificity, endocytosis and turnover.

Its subcellular location is the cell membrane. Its function is as follows. Part of TspanC8 subgroup, composed of 6 members that interact with the transmembrane metalloprotease ADAM10. This interaction is required for ADAM10 exit from the endoplasmic reticulum and for enzymatic maturation and trafficking to the cell surface as well as substrate specificity. Different TspanC8/ADAM10 complexes have distinct substrates. Seems to regulate VE-cadherin expression in endothelial cells probably through interaction with ADAM10, promoting leukocyte transmigration. This Rattus norvegicus (Rat) protein is Tetraspanin-17 (Tspan17).